A 1159-amino-acid polypeptide reads, in one-letter code: CRISPR-associated endoribonuclease Cas13a (1159 aa).

Positions 1 to 11 (MKVTKVGGISH) are binds crRNA repeat and spacer. The segment at 1-170 (MKVTKVGGIS…NNIEKVEGKS (170 aa)) is NTD. Binds crRNA repeat regions lie at residues 139–151 (NKIN…FEKN), 172–176 (RNIIY), 224–233 (REFYHEIIGR), 271–276 (QVFYKY), 294–297 (HFVE), and 301–305 (SQLLK). Residues 171 to 360 (KRNIIYDYYR…YNYYLQDGEI (190 aa)) form a helical-1 region. Residues 319–328 (KIKRIFEYQN) form a binds crRNA processing site region. 2 binds crRNA repeat regions span residues 336 to 340 (KLLNK) and 371 to 378 (QNEAFLRN). An HEPN-like fold 1-I region spans residues 361-508 (ATSDFIARNR…SKKMFQNEIN (148 aa)). Catalysis depends on for target RNA cleavage residues arginine 472 and histidine 477. The segment at 509 to 751 (EKKLKLKIFR…EFLREIKLGN (243 aa)) is helical-2. The segment at 519–522 (QLNS) is binds target RNA. Residues 547-558 (NKNIPFVPSFTK) form a binds crRNA spacer region. Residues 590–597 (DAQIYLLK) are binds target RNA. The binds crRNA spacer stretch occupies residues 718-722 (KQEFD). Residues 752–813 (ILKYTERLNM…NLDNNRVTED (62 aa)) are HEPN-like fold 1-II. The segment at 780–783 (SLEK) is binds crRNA repeat. Residues 804–810 (NLDNNRV) are binds crRNA spacer and target RNA. Residues 814–946 (FELEADEIGK…EYTHLKNKVE (133 aa)) form a linker region. Binds crRNA spacer stretches follow at residues 845-857 (KIYF…IKHR) and 938-942 (YTHLK). Residues 880 to 946 (YKISIEELKK…EYTHLKNKVE (67 aa)) adopt a coiled-coil conformation. The interval 947–1159 (FNELNLLQGL…YKMEEKKSEN (213 aa)) is HEPN-like fold 2. The binds crRNA repeat stretch occupies residues 962 to 963 (HR). The segment at 995–998 (FENK) is binds 3'-end of target RNA, in adjacent protein. Residues arginine 1048 and histidine 1053 each act as for target RNA cleavage in the active site. 2 binds crRNA processing site regions span residues 1072–1082 (RKLLSYDRKLK) and 1104–1108 (IGADK).

Belongs to the CRISPR-associated endoribonuclease Cas13a family. In terms of assembly, crystals show the 3'-end of target RNA interacting with an adjacent protein molecule, and mutagenesis of those amino acid residues decreases target RNA cleavage, but it is not clear if this is physiological. A divalent metal cation serves as cofactor.

With respect to regulation, target RNA acts as an activator for non-specific ssRNA cleavage; the target RNA and complementary crRNA must both be at least 20 nucleotides long to activate the HEPN-like catalytic pocket for RNase activity. CRISPR (clustered regularly interspaced short palindromic repeat), is an adaptive immune system that provides protection against mobile genetic elements (viruses, transposable elements and conjugative plasmids). CRISPR clusters contain sequences complementary to antecedent mobile elements (spacer sequences) and target invading nucleic acids. Unlike many single-component effectors, this CRISPR-Cas system targets RNA. CRISPR clusters are transcribed from pre-CRISPR RNA (crRNA) and processed into crRNA by this protein. pre-crRNA processing yields a 5'-OH and probably a 2',3'-cyclic phosphate. Also cleaves pre-crRNA from several other type VI-A CRISPR systems. Cleaves linear target ssRNA in a crRNA-dependent fashion, preferentially before U residues. Cleavage of target ssRNA is about 80-fold faster than pre-crRNA processing and uses a different active site. Binding a viable target RNA target activates this protein for non-specific RNA degradation in vitro (called collateral RNA degradation). Activation occurs with 10 fM target RNA. crRNA maturation is not essential for activation of RNA degradation, but lack of mature crRNA (due to mutagenesis) decreases activation levels. This system has a 3' protospacer flanking site in the target RNA (PFS), which is C and unavailable to base pair with crRNA (PFS is equivalent to PAM, the protospacer adjacent motif). This Leptotrichia buccalis (strain ATCC 14201 / DSM 1135 / JCM 12969 / NCTC 10249 / C-1013-b) protein is CRISPR-associated endoribonuclease Cas13a.